A 1366-amino-acid chain; its full sequence is Serine/threonine-protein kinase RUNKEL (1366 aa).

ATP is bound by residues 10–18 (IGHGKCSTV) and lysine 33. Catalysis depends on aspartate 121, which acts as the Proton acceptor. 4 disordered regions span residues 276–356 (TKPC…VNIL), 367–386 (QKEN…NENC), 398–502 (LDFD…DSSK), and 524–549 (PSRK…FSKK). The segment covering 283 to 302 (RNGDRPNKTPPKYREKDRKG) has biased composition (basic and acidic residues). The span at 304 to 313 (SKQNENSIQG) shows a compositional bias: polar residues. Residues 367 to 376 (QKENEKENYR) are compositionally biased toward basic and acidic residues. Residues 398–414 (LDFDENNDDEGPDESEG) show a composition bias toward acidic residues. Positions 422–433 (QEERVMSHNENH) are enriched in basic and acidic residues. Residues 438–454 (VVSSNVPDENSSANETP) are compositionally biased toward polar residues. 12 HEAT repeats span residues 595-633 (LTNG…HSTS), 638-675 (LANS…YIST), 699-737 (QVSN…QGAY), 835-872 (TEEK…NSRR), 878-907 (FCNA…AFVN), 908-945 (VIAS…RAPV), 946-986 (KTNA…LVEA), 992-1018 (DDFR…NGEI), 1019-1057 (IIRE…LLTE), 1072-1111 (ISNS…IKIS), 1279-1316 (TNLP…YACK), and 1329-1366 (GHDV…RLPR).

Belongs to the protein kinase superfamily. Ser/Thr protein kinase family. In terms of assembly, binds to microtubules (MT). Expressed in proliferating tissues of seedlings, lateral roots, young rosette leaves, siliques, flowers, embryos and stems (including apical meristem).

Its subcellular location is the cytoplasm. It is found in the cytoskeleton. It localises to the phragmoplast. The protein localises to the spindle. The catalysed reaction is L-seryl-[protein] + ATP = O-phospho-L-seryl-[protein] + ADP + H(+). The enzyme catalyses L-threonyl-[protein] + ATP = O-phospho-L-threonyl-[protein] + ADP + H(+). Essential protein that regulates phragmoplast microtubule organization during cell plate expansion in cytokinesis during cell division, both somatic and syncytial. Required for endosperm cellularisation. In pollen development, involved in cellularisation during microsporogenesis by regulating radial microtubules (MT) organization in microspore mother cells. Seems to not have kinase activity. The protein is Serine/threonine-protein kinase RUNKEL of Arabidopsis thaliana (Mouse-ear cress).